The following is a 360-amino-acid chain: Phospho-N-acetylmuramoyl-pentapeptide-transferase (360 aa).

The next 10 membrane-spanning stretches (helical) occupy residues Gly-27 to Leu-47, Thr-74 to Leu-94, Val-99 to Leu-119, Leu-135 to Pro-155, Ile-165 to Val-185, Gly-199 to Ala-219, Ala-236 to Phe-256, Ile-263 to Ala-283, Ile-288 to Val-308, and Gln-337 to Leu-357.

This sequence belongs to the glycosyltransferase 4 family. MraY subfamily. The cofactor is Mg(2+).

The protein localises to the cell inner membrane. It catalyses the reaction UDP-N-acetyl-alpha-D-muramoyl-L-alanyl-gamma-D-glutamyl-meso-2,6-diaminopimeloyl-D-alanyl-D-alanine + di-trans,octa-cis-undecaprenyl phosphate = di-trans,octa-cis-undecaprenyl diphospho-N-acetyl-alpha-D-muramoyl-L-alanyl-D-glutamyl-meso-2,6-diaminopimeloyl-D-alanyl-D-alanine + UMP. It functions in the pathway cell wall biogenesis; peptidoglycan biosynthesis. In terms of biological role, catalyzes the initial step of the lipid cycle reactions in the biosynthesis of the cell wall peptidoglycan: transfers peptidoglycan precursor phospho-MurNAc-pentapeptide from UDP-MurNAc-pentapeptide onto the lipid carrier undecaprenyl phosphate, yielding undecaprenyl-pyrophosphoryl-MurNAc-pentapeptide, known as lipid I. In Methylocella silvestris (strain DSM 15510 / CIP 108128 / LMG 27833 / NCIMB 13906 / BL2), this protein is Phospho-N-acetylmuramoyl-pentapeptide-transferase.